Here is a 365-residue protein sequence, read N- to C-terminus: S-adenosylmethionine:tRNA ribosyltransferase-isomerase (365 aa).

Belongs to the QueA family. In terms of assembly, monomer.

The protein localises to the cytoplasm. The enzyme catalyses 7-aminomethyl-7-carbaguanosine(34) in tRNA + S-adenosyl-L-methionine = epoxyqueuosine(34) in tRNA + adenine + L-methionine + 2 H(+). It participates in tRNA modification; tRNA-queuosine biosynthesis. Functionally, transfers and isomerizes the ribose moiety from AdoMet to the 7-aminomethyl group of 7-deazaguanine (preQ1-tRNA) to give epoxyqueuosine (oQ-tRNA). This Rickettsia africae (strain ESF-5) protein is S-adenosylmethionine:tRNA ribosyltransferase-isomerase.